Consider the following 240-residue polypeptide: Lactate utilization protein C (240 aa).

The protein belongs to the LutC/YkgG family.

In terms of biological role, is involved in L-lactate degradation and allows cells to grow with lactate as the sole carbon source. This Geobacillus thermodenitrificans (strain NG80-2) protein is Lactate utilization protein C.